Reading from the N-terminus, the 180-residue chain is Large ribosomal subunit protein uL6 (180 aa).

It belongs to the universal ribosomal protein uL6 family. As to quaternary structure, part of the 50S ribosomal subunit.

Its function is as follows. This protein binds to the 23S rRNA, and is important in its secondary structure. It is located near the subunit interface in the base of the L7/L12 stalk, and near the tRNA binding site of the peptidyltransferase center. In Clostridium tetani (strain Massachusetts / E88), this protein is Large ribosomal subunit protein uL6.